The sequence spans 240 residues: uncharacterized protein (240 aa).

The Cytoplasmic segment spans residues 1–85; that stretch reads MSGFIKSTLL…LCGCCCWTNT (85 aa). Residues 86–106 form a helical membrane-spanning segment; that stretch reads IGWAPLLALLPVIGPLLMYWV. The Extracellular portion of the chain corresponds to 107–131; that stretch reads HDKLIELADDRYKLPAEIKVKMHGN. Residues 132–152 form a helical membrane-spanning segment; it reads IVIDLLISLVPILGSVFAWLH. The Cytoplasmic segment spans residues 153–240; sequence ACSTRNAAIV…TNGRPQRGYR (88 aa). A disordered region spans residues 181–240; it reads QKEENEKHSNANTAPPVVGGNKNVNGNRNNSKMYNRPPVTAPPAPAYTRSTNGRPQRGYR. Positions 197–210 are enriched in low complexity; sequence VVGGNKNVNGNRNN.

Its subcellular location is the membrane. This is an uncharacterized protein from Saccharomyces cerevisiae (strain ATCC 204508 / S288c) (Baker's yeast).